The sequence spans 829 residues: Leucine--tRNA ligase (829 aa).

The 'HIGH' region motif lies at 40–50; it reads PYPSGNIHMGH. Positions 594 to 598 match the 'KMSKS' region motif; the sequence is KMSKS. K597 provides a ligand contact to ATP.

This sequence belongs to the class-I aminoacyl-tRNA synthetase family.

It is found in the cytoplasm. It carries out the reaction tRNA(Leu) + L-leucine + ATP = L-leucyl-tRNA(Leu) + AMP + diphosphate. In Anaplasma marginale (strain St. Maries), this protein is Leucine--tRNA ligase.